Consider the following 129-residue polypeptide: Small ribosomal subunit protein uS11 (129 aa).

This sequence belongs to the universal ribosomal protein uS11 family. Part of the 30S ribosomal subunit. Interacts with proteins S7 and S18. Binds to IF-3.

Functionally, located on the platform of the 30S subunit, it bridges several disparate RNA helices of the 16S rRNA. Forms part of the Shine-Dalgarno cleft in the 70S ribosome. This is Small ribosomal subunit protein uS11 from Nitrosomonas europaea (strain ATCC 19718 / CIP 103999 / KCTC 2705 / NBRC 14298).